The sequence spans 209 residues: ATP-dependent Clp protease proteolytic subunit (209 aa).

Residue serine 106 is the Nucleophile of the active site. The active site involves histidine 131.

It belongs to the peptidase S14 family. Fourteen ClpP subunits assemble into 2 heptameric rings which stack back to back to give a disk-like structure with a central cavity, resembling the structure of eukaryotic proteasomes.

It is found in the cytoplasm. It carries out the reaction Hydrolysis of proteins to small peptides in the presence of ATP and magnesium. alpha-casein is the usual test substrate. In the absence of ATP, only oligopeptides shorter than five residues are hydrolyzed (such as succinyl-Leu-Tyr-|-NHMec, and Leu-Tyr-Leu-|-Tyr-Trp, in which cleavage of the -Tyr-|-Leu- and -Tyr-|-Trp bonds also occurs).. Cleaves peptides in various proteins in a process that requires ATP hydrolysis. Has a chymotrypsin-like activity. Plays a major role in the degradation of misfolded proteins. The polypeptide is ATP-dependent Clp protease proteolytic subunit (Brucella melitensis biotype 2 (strain ATCC 23457)).